The sequence spans 276 residues: NH(3)-dependent NAD(+) synthetase (276 aa).

43–50 provides a ligand contact to ATP; sequence GISGGVDS. A Mg(2+)-binding site is contributed by Asp49. Arg146 provides a ligand contact to deamido-NAD(+). Thr166 provides a ligand contact to ATP. Glu171 contributes to the Mg(2+) binding site. Deamido-NAD(+)-binding residues include Lys179 and Asp186. The ATP site is built by Lys195 and Thr217. Residue 266-267 coordinates deamido-NAD(+); that stretch reads HK.

This sequence belongs to the NAD synthetase family. As to quaternary structure, homodimer.

The enzyme catalyses deamido-NAD(+) + NH4(+) + ATP = AMP + diphosphate + NAD(+) + H(+). It functions in the pathway cofactor biosynthesis; NAD(+) biosynthesis; NAD(+) from deamido-NAD(+) (ammonia route): step 1/1. Functionally, catalyzes the ATP-dependent amidation of deamido-NAD to form NAD. Uses ammonia as a nitrogen source. This Aliivibrio salmonicida (strain LFI1238) (Vibrio salmonicida (strain LFI1238)) protein is NH(3)-dependent NAD(+) synthetase.